The chain runs to 1180 residues: RecBCD enzyme subunit RecB (1180 aa).

The interval 1-852 is DNA-binding and helicase activity, interacts with RecC; that stretch reads MITTIPKSIN…QSGKNHISTK (852 aa). Residues 3 to 448 enclose the UvrD-like helicase ATP-binding domain; that stretch reads TTIPKSINVT…YFLDTNWRSS (446 aa). ATP is bound at residue 24-31; that stretch reads ASAGTGKT. A UvrD-like helicase C-terminal domain is found at 478 to 745; it reads SSRINKTTKF…KIVSIHKSKG (268 aa). A nuclease activity, interacts with RecD and RecA region spans residues 905-1180; that stretch reads NYNFTSYSQL…EIIKKLEQIF (276 aa). H964, D1075, and D1088 together coordinate Mg(2+). Catalysis depends on D1088, which acts as the For nuclease activity.

The protein belongs to the helicase family. UvrD subfamily. In terms of assembly, heterotrimer of RecB, RecC and RecD. All subunits contribute to DNA-binding. Interacts with RecA. It depends on Mg(2+) as a cofactor.

The catalysed reaction is Exonucleolytic cleavage (in the presence of ATP) in either 5'- to 3'- or 3'- to 5'-direction to yield 5'-phosphooligonucleotides.. It catalyses the reaction Couples ATP hydrolysis with the unwinding of duplex DNA by translocating in the 3'-5' direction.. It carries out the reaction ATP + H2O = ADP + phosphate + H(+). A helicase/nuclease that prepares dsDNA breaks (DSB) for recombinational DNA repair. Binds to DSBs and unwinds DNA via a highly rapid and processive ATP-dependent bidirectional helicase activity. Unwinds dsDNA until it encounters a Chi (crossover hotspot instigator) sequence from the 3' direction. Cuts ssDNA a few nucleotides 3' to the Chi site. The properties and activities of the enzyme are changed at Chi. The Chi-altered holoenzyme produces a long 3'-ssDNA overhang and facilitates RecA-binding to the ssDNA for homologous DNA recombination and repair. Holoenzyme degrades any linearized DNA that is unable to undergo homologous recombination. In the holoenzyme this subunit contributes ATPase, 3'-5' helicase, exonuclease activity and loads RecA onto ssDNA. The chain is RecBCD enzyme subunit RecB from Buchnera aphidicola subsp. Baizongia pistaciae (strain Bp).